The following is a 514-amino-acid chain: DNA-(apurinic or apyrimidinic site) endonuclease 2 (514 aa).

Mg(2+) contacts are provided by Asn8 and Glu48. Tyr156 is an active-site residue. Residues Asp197, Asn199, Asp303, and His304 each contribute to the Mg(2+) site. Asp197 serves as the catalytic Proton donor/acceptor. Residue His304 is the Proton acceptor of the active site. Positions 359–417 (PSNQTQVHMRKNKARVRSTRSRPSKTGSSRGQKNLMSYFQPSSSGPQTSNLDLPSLGTL) are disordered. Residues 366 to 381 (HMRKNKARVRSTRSRP) show a composition bias toward basic residues. A Glycyl lysine isopeptide (Lys-Gly) (interchain with G-Cter in ubiquitin) cross-link involves residue Lys371. Positions 382-410 (SKTGSSRGQKNLMSYFQPSSSGPQTSNLD) are enriched in polar residues. A required for the interaction and colocalization with PCNA in nuclear foci in presence of oxidative-induced DNA damaging agents region spans residues 390 to 397 (QKNLMSYF). 4 residues coordinate Zn(2+): Cys465, His468, Cys491, and Cys505. A GRF-type zinc finger spans residues 465-514 (CGGHREPCVMRTVKKPGPNLGRHFYMCARPQGPPTDPSSRCNFFLWSRPS).

It belongs to the DNA repair enzymes AP/ExoA family. Interacts with PCNA; this interaction is triggered by reactive oxygen species and increased by misincorporation of uracil in nuclear DNA. Mg(2+) serves as cofactor. The cofactor is Mn(2+). Ubiquitinated by the CUL9-RBX1 complex. Ubiquitinated by MKRN3 at Lys-371 leading to proteasomal degradation.

It is found in the nucleus. The protein localises to the cytoplasm. The protein resides in the mitochondrion. The enzyme catalyses Exonucleolytic cleavage in the 3'- to 5'-direction to yield nucleoside 5'-phosphates.. Its activity is regulated as follows. 3'-5' exonuclease activity is activated by sodium and manganese. 3'-5' exonuclease and 3'-phosphodiesterase activities are stimulated in presence of PCNA. Its function is as follows. Functions as a weak apurinic/apyrimidinic (AP) endodeoxyribonuclease in the DNA base excision repair (BER) pathway of DNA lesions induced by oxidative and alkylating agents. Initiates repair of AP sites in DNA by catalyzing hydrolytic incision of the phosphodiester backbone immediately adjacent to the damage, generating a single-strand break with 5'-deoxyribose phosphate and 3'-hydroxyl ends. Also displays double-stranded DNA 3'-5' exonuclease, 3'-phosphodiesterase activities. Shows robust 3'-5' exonuclease activity on 3'-recessed heteroduplex DNA and is able to remove mismatched nucleotides preferentially. Shows fairly strong 3'-phosphodiesterase activity involved in the removal of 3'-damaged termini formed in DNA by oxidative agents. In the nucleus functions in the PCNA-dependent BER pathway. Plays a role in reversing blocked 3' DNA ends, problematic lesions that preclude DNA synthesis. Required for somatic hypermutation (SHM) and DNA cleavage step of class switch recombination (CSR) of immunoglobulin genes. Required for proper cell cycle progression during proliferation of peripheral lymphocytes. The protein is DNA-(apurinic or apyrimidinic site) endonuclease 2 (APEX2) of Bos taurus (Bovine).